We begin with the raw amino-acid sequence, 542 residues long: Chaperonin GroEL (542 aa).

ATP-binding positions include 29–32 (TIGP), 86–90 (DGTTT), G413, 477–479 (NAA), and D493.

The protein belongs to the chaperonin (HSP60) family. In terms of assembly, forms a cylinder of 14 subunits composed of two heptameric rings stacked back-to-back. Interacts with the co-chaperonin GroES.

Its subcellular location is the cytoplasm. It catalyses the reaction ATP + H2O + a folded polypeptide = ADP + phosphate + an unfolded polypeptide.. In terms of biological role, together with its co-chaperonin GroES, plays an essential role in assisting protein folding. The GroEL-GroES system forms a nano-cage that allows encapsulation of the non-native substrate proteins and provides a physical environment optimized to promote and accelerate protein folding. This chain is Chaperonin GroEL, found in Lactobacillus acidophilus (strain ATCC 700396 / NCK56 / N2 / NCFM).